Reading from the N-terminus, the 334-residue chain is Delta(1)-pyrroline-2-carboxylate/Delta(1)-piperideine-2-carboxylate reductase (334 aa).

Serine 44 serves as the catalytic Charge relay system. Histidine 45 functions as the Proton donor in the catalytic mechanism. Arginine 49 contributes to the substrate binding site. An NADP(+)-binding site is contributed by 117–121; sequence HFSAL. Threonine 157 contacts substrate. Residue 175–177 coordinates NADP(+); it reads DFA. Position 183-184 (183-184) interacts with substrate; that stretch reads RG. Glutamate 185 serves as the catalytic Charge relay system. NADP(+) is bound by residues 226–227 and 301–307; these read HK and RLPSQRR.

It belongs to the LDH2/MDH2 oxidoreductase family. Homodimer.

It catalyses the reaction L-pipecolate + NADP(+) = Delta(1)-piperideine-2-carboxylate + NADPH + H(+). The enzyme catalyses L-proline + NADP(+) = 1-pyrroline-2-carboxylate + NADPH + H(+). The catalysed reaction is cis-4-hydroxy-L-proline + NADP(+) = Delta(1)-pyrroline-(4S)-hydroxy-2-carboxylate + NADPH + 2 H(+). Its function is as follows. Catalyzes the reduction of both Delta(1)-pyrroline-2-carboxylate (Pyr2C) and Delta(1)-piperideine-2-carboxylate (Pip2C) to L-proline and L-pipecolate, respectively, using NADPH as the electron donor. Cannot use NADH instead of NADPH. Is likely involved in a degradation pathway that converts trans-3-hydroxy-L-proline (t3LHyp) to L-proline, which would allow P.aeruginosa to grow on t3LHyp as a sole carbon source. Can also catalyze the reverse oxidation reactions, albeit at a much lower rate. Is also able to use Delta(1)-pyrroline-(4S)-hydroxy-2-carboxylate (Pyr4SH2C) and cis-4-hydroxy-L-proline (c4LHyp) as substrates, and might be involved in the metabolism of c4LHyp, a compound which is generated by the hydroxylation of free L-proline in bacteria. This Pseudomonas aeruginosa (strain ATCC 15692 / DSM 22644 / CIP 104116 / JCM 14847 / LMG 12228 / 1C / PRS 101 / PAO1) protein is Delta(1)-pyrroline-2-carboxylate/Delta(1)-piperideine-2-carboxylate reductase.